The following is a 748-amino-acid chain: MSSDTSASRPPQPDTRTASKSESENPAIPSPHPKSNAPLTNRDWWPNQIDVSRLHPHVAEANPLGEDFDYAEEFAKLDVEALKADVISVMTTSQDWWPADYGHYGGLFIRMSWHAAGTYRIHDGRGGGGQGMQRFAPLNSWPDNVSLDKARRLLWPVKKKYGNKISWADLIIFAGNCALESMGFKTFGFAFGREDVWEPEEILWGEEDEWLGTDKRYPGTGERELAQPYGATTMGLIYVNPEGPEGKPDPIAAAIDIRETFGRMAMNDEETAALIVGGHSFGKTHGAGDADLVGPEPEAAPIEQQGLGWKSSHGTGVGKDAITSGLEVVWTPTPTKWDNTFLETLYGYEWELTKSPAGAWQFTAKDGAGAGTIPDPFGGPGRAPTMLVTDISLRESPIYRDITRRWLDHPEELADAFAKAWYKLLHRDMGLVSRFLGPWVPEPQLWQDPVPPVDHPLVDDNDVAALKDKVLASGLSVPQLVKTAWSAAGSYRNTDKRGGANGGRLRLQPQRNWEANEPSELDKVLPVLEKIQQDFNASASGGKKISLADLIVLAGSAAVEKAAKDAGYEISVHFAPGRTDASQESTDVDSFAVLEPRADGFRNFARPGEKAPLEQLLLERAYLLGVTGPEMTVLVGGLRALGANHGGSKHGVFTDRPGALTNDFFVNLLDMGTEWKASETAENVYEGHDRATGALKWTATANDLVFGSNSVLRALAEVYAQDDNQGKFVEDFVAAWVKVMNNDRFDLK.

Residues 1 to 16 are compositionally biased toward polar residues; sequence MSSDTSASRPPQPDTR. A disordered region spans residues 1 to 43; sequence MSSDTSASRPPQPDTRTASKSESENPAIPSPHPKSNAPLTNRD. The tryptophyl-tyrosyl-methioninium (Trp-Tyr) (with M-264) cross-link spans 113–238; sequence WHAAGTYRIH…YGATTMGLIY (126 aa). The active-site Proton acceptor is the His114. The segment at residues 238–264 is a cross-link (tryptophyl-tyrosyl-methioninium (Tyr-Met) (with W-113)); that stretch reads YVNPEGPEGKPDPIAAAIDIRETFGRM. Heme b is bound at residue His279.

The protein belongs to the peroxidase family. Peroxidase/catalase subfamily. Homodimer or homotetramer. The cofactor is heme b. Formation of the three residue Trp-Tyr-Met cross-link is important for the catalase, but not the peroxidase activity of the enzyme.

The enzyme catalyses H2O2 + AH2 = A + 2 H2O. It carries out the reaction 2 H2O2 = O2 + 2 H2O. Its function is as follows. Bifunctional enzyme with both catalase and broad-spectrum peroxidase activity. The protein is Catalase-peroxidase of Mycolicibacterium paratuberculosis (strain ATCC BAA-968 / K-10) (Mycobacterium paratuberculosis).